A 560-amino-acid chain; its full sequence is Zinc finger protein 250 (560 aa).

One can recognise a KRAB domain in the interval 22 to 93 (LTFEDVAVLL…DRKGAKKSQG (72 aa)). Residues Lys125, Lys136, Lys148, and Lys162 each participate in a glycyl lysine isopeptide (Lys-Gly) (interchain with G-Cter in SUMO2) cross-link. The C2H2-type 1 zinc-finger motif lies at 199-221 (YMCVECGKCFGRSSHLLQHQRIH). Lys225 is covalently cross-linked (Glycyl lysine isopeptide (Lys-Gly) (interchain with G-Cter in SUMO2)). C2H2-type zinc fingers lie at residues 227 to 249 (YVCS…RRIH), 255 to 277 (YECN…HKIH), 283 to 305 (HECL…QRIH), 311 to 333 (YVCP…QRVH), 339 to 361 (HRCN…QRIH), 367 to 389 (YTCS…HNVH), and 395 to 417 (YECS…ERIH). A Glycyl lysine isopeptide (Lys-Gly) (interchain with G-Cter in SUMO2) cross-link involves residue Lys421. 5 consecutive C2H2-type zinc fingers follow at residues 423 to 445 (YACY…QRVH), 451 to 473 (YVCG…ERIH), 479 to 501 (FQCT…LRTH), 507 to 529 (YECN…QRIH), and 535 to 557 (YECG…QKVH).

Belongs to the krueppel C2H2-type zinc-finger protein family.

The protein resides in the nucleus. In terms of biological role, may be involved in transcriptional regulation. This Homo sapiens (Human) protein is Zinc finger protein 250 (ZNF250).